The chain runs to 122 residues: Large ribosomal subunit protein uL22 (122 aa).

Belongs to the universal ribosomal protein uL22 family. Part of the 50S ribosomal subunit.

Its function is as follows. This protein binds specifically to 23S rRNA; its binding is stimulated by other ribosomal proteins, e.g. L4, L17, and L20. It is important during the early stages of 50S assembly. It makes multiple contacts with different domains of the 23S rRNA in the assembled 50S subunit and ribosome. The globular domain of the protein is located near the polypeptide exit tunnel on the outside of the subunit, while an extended beta-hairpin is found that lines the wall of the exit tunnel in the center of the 70S ribosome. The protein is Large ribosomal subunit protein uL22 of Thermosynechococcus vestitus (strain NIES-2133 / IAM M-273 / BP-1).